The following is a 650-amino-acid chain: 1-deoxy-D-xylulose-5-phosphate synthase (650 aa).

Residues His-73 and 113-115 each bind thiamine diphosphate; that span reads SHA. Asp-145 is a binding site for Mg(2+). Thiamine diphosphate contacts are provided by residues 146 to 147, Asn-175, Tyr-287, and Glu-369; that span reads GA. Mg(2+) is bound at residue Asn-175.

Belongs to the transketolase family. DXPS subfamily. Homodimer. Requires Mg(2+) as cofactor. Thiamine diphosphate is required as a cofactor.

It carries out the reaction D-glyceraldehyde 3-phosphate + pyruvate + H(+) = 1-deoxy-D-xylulose 5-phosphate + CO2. Its pathway is metabolic intermediate biosynthesis; 1-deoxy-D-xylulose 5-phosphate biosynthesis; 1-deoxy-D-xylulose 5-phosphate from D-glyceraldehyde 3-phosphate and pyruvate: step 1/1. Catalyzes the acyloin condensation reaction between C atoms 2 and 3 of pyruvate and glyceraldehyde 3-phosphate to yield 1-deoxy-D-xylulose-5-phosphate (DXP). The protein is 1-deoxy-D-xylulose-5-phosphate synthase of Leifsonia xyli subsp. xyli (strain CTCB07).